The primary structure comprises 284 residues: 4-diphosphocytidyl-2-C-methyl-D-erythritol kinase (284 aa).

Lys14 is an active-site residue. Residue 98–108 (PMGGGLGGGSS) coordinates ATP. Asp140 is an active-site residue.

This sequence belongs to the GHMP kinase family. IspE subfamily.

It carries out the reaction 4-CDP-2-C-methyl-D-erythritol + ATP = 4-CDP-2-C-methyl-D-erythritol 2-phosphate + ADP + H(+). The protein operates within isoprenoid biosynthesis; isopentenyl diphosphate biosynthesis via DXP pathway; isopentenyl diphosphate from 1-deoxy-D-xylulose 5-phosphate: step 3/6. In terms of biological role, catalyzes the phosphorylation of the position 2 hydroxy group of 4-diphosphocytidyl-2C-methyl-D-erythritol. This Shewanella sp. (strain ANA-3) protein is 4-diphosphocytidyl-2-C-methyl-D-erythritol kinase.